The following is a 459-amino-acid chain: Exodeoxyribonuclease 7 large subunit (459 aa).

This sequence belongs to the XseA family. In terms of assembly, heterooligomer composed of large and small subunits.

The protein resides in the cytoplasm. It carries out the reaction Exonucleolytic cleavage in either 5'- to 3'- or 3'- to 5'-direction to yield nucleoside 5'-phosphates.. Functionally, bidirectionally degrades single-stranded DNA into large acid-insoluble oligonucleotides, which are then degraded further into small acid-soluble oligonucleotides. The chain is Exodeoxyribonuclease 7 large subunit from Pseudomonas fluorescens (strain SBW25).